The chain runs to 161 residues: Decarboxylase (161 aa).

The EthD domain maps to 29–131; that stretch reads QGMSEEAYRK…VGDHENFADT (103 aa).

It belongs to the tpcK family.

It catalyses the reaction atrochrysone carboxylate + H(+) = atrochrysone + CO2. The protein operates within secondary metabolite biosynthesis. Functionally, decarboxylase; part of the gene cluster that mediates the biosynthesis of monodictyphenone, a prenyl xanthone derivative. The pathway begins with the synthesis of atrochrysone thioester by the polyketide synthase (PKS) mdpG. The atrochrysone carboxyl ACP thioesterase mdpF then breaks the thioester bond and releases the atrochrysone carboxylic acid from mdpG. The atrochrysone carboxylic acid is then converted to atrochrysone which is further transformed into emodin anthrone by mdpH-1 and mdpH-2. Emodin is further modified to yield monodictyphenone via several steps involving mdpB, mdpC mdpJ, mdpK and mdpL. These enzymes with xptA, xptB and xptC are also proposed to be involved in the synthesis of shamixanthone from emodin. Especially, direct reduction of emodin by the short chain dehydrogenase mdpC followed by dehydration catalyzed by the scytalone dehydratase-like protein mdpB gives loss of oxygen and formation of chrysophanol intermediate in two simple steps. This is Decarboxylase from Emericella nidulans (strain FGSC A4 / ATCC 38163 / CBS 112.46 / NRRL 194 / M139) (Aspergillus nidulans).